The sequence spans 687 residues: Protein 4.2 (687 aa).

A lipid anchor (N-myristoyl glycine) is attached at glycine 2. Residues 31 to 39 (LFVRRGQPF) form a band 3 binding region. A Phosphoserine modification is found at serine 247.

It belongs to the transglutaminase superfamily. Transglutaminase family. In terms of assembly, component of the ankyrin-1 complex in the erythrocyte, composed of ANK1, RHCE, RHAG, SLC4A1, EPB42, GYPA, GYPB and AQP1. Interacts with SLC4A1 (via the cytoplasmic domain); this interaction is mediated by the SLC4A1 Band 3-I dimer. Interacts with ANK1 (via ANK 1-13 repeats). Interacts with AQP1 (via the C-terminal).

It localises to the cell membrane. It is found in the cytoplasm. Its subcellular location is the cytoskeleton. Functionally, component of the ankyrin-1 complex, a multiprotein complex involved in the stability and shape of the erythrocyte membrane. This chain is Protein 4.2, found in Bos taurus (Bovine).